A 180-amino-acid polypeptide reads, in one-letter code: UPF0227 protein YE1706 (180 aa).

This sequence belongs to the UPF0227 family.

This Yersinia enterocolitica serotype O:8 / biotype 1B (strain NCTC 13174 / 8081) protein is UPF0227 protein YE1706.